The sequence spans 245 residues: Complement C1q subcomponent subunit A (245 aa).

A signal peptide spans 1–22 (METSQGWLVACVLAVTLVWTVA). Positions 31–109 (GKDGVAGIPG…KGVKGNPGNI (79 aa)) constitute a Collagen-like domain. Positions 35–111 (VAGIPGRPGR…VKGNPGNIRD (77 aa)) are disordered. 4-hydroxyproline occurs at positions 39 and 45. K48 is subject to 5-hydroxylysine. An O-linked (Gal...) hydroxylysine glycan is attached at K48. P54 is subject to 4-hydroxyproline. K67 carries the 5-hydroxylysine modification. Residue K67 is glycosylated (O-linked (Gal...) hydroxylysine). 4-hydroxyproline occurs at positions 79 and 85. K100 bears the 5-hydroxylysine mark. K100 is a glycosylation site (O-linked (Gal...) hydroxylysine). Residues 110 to 245 (RDQPRPAFSA…FSGFLIFPSA (136 aa)) form the C1q domain. Residue N146 is glycosylated (N-linked (GlcNAc...) asparagine). C172 and C190 form a disulfide bridge. A Ca(2+)-binding site is contributed by Q199.

As to quaternary structure, core component of the complement C1 complex, a calcium-dependent complex composed of 1 molecule of the C1Q subcomplex, 2 molecules of C1R and 2 molecules of C1S. The C1Q subcomplex is composed 18 subunits: 3 chains of C1QA, C1QB, and C1QC trimerize to form 6 collagen-like triple helices connected to six globular ligand-recognition modules (C1q domain). Interacts with CR1 (via Sushi 24 and Sushi 25 domains). Interacts (via C-terminus) with CD33; this interaction activates CD33 inhibitory motifs. In terms of processing, O-linked glycans are assumed to be the Glc-Gal disaccharides typically found as secondary modifications of hydroxylated lysines in collagen-like domains.

It is found in the secreted. The protein localises to the cell surface. Its activity is regulated as follows. The C1Q subcomplex is inhibited by sulfated molecules, such as triterpenoid sulfates, heparan sulfate, or chondroitin sulfates. Core component of the complement C1 complex, a multiprotein complex that initiates the classical pathway of the complement system, a cascade of proteins that leads to phagocytosis and breakdown of pathogens and signaling that strengthens the adaptive immune system. The classical complement pathway is initiated by the C1Q subcomplex of the C1 complex, which specifically binds IgG or IgM immunoglobulins complexed with antigens, forming antigen-antibody complexes on the surface of pathogens: C1QA, together with C1QB and C1QC, specifically recognizes and binds the Fc regions of IgG or IgM via its C1q domain. Immunoglobulin-binding activates the proenzyme C1R, which cleaves C1S, initiating the proteolytic cascade of the complement system. The C1Q subcomplex is activated by a hexamer of IgG complexed with antigens, while it is activated by a pentameric IgM. The C1Q subcomplex also recognizes and binds phosphatidylserine exposed on the surface of cells undergoing programmed cell death, possibly promoting activation of the complement system. The polypeptide is Complement C1q subcomponent subunit A (Rattus norvegicus (Rat)).